We begin with the raw amino-acid sequence, 155 residues long: Probable Brix domain-containing ribosomal biogenesis protein (155 aa).

A Brix domain is found at 1-155 (MLITSSRKPS…KNYRKMVMSE (155 aa)).

Functionally, probably involved in the biogenesis of the ribosome. This is Probable Brix domain-containing ribosomal biogenesis protein from Methanococcoides burtonii (strain DSM 6242 / NBRC 107633 / OCM 468 / ACE-M).